The following is a 93-amino-acid chain: Small ribosomal subunit protein uS19 (93 aa).

The protein belongs to the universal ribosomal protein uS19 family.

Functionally, protein S19 forms a complex with S13 that binds strongly to the 16S ribosomal RNA. This Wolinella succinogenes (strain ATCC 29543 / DSM 1740 / CCUG 13145 / JCM 31913 / LMG 7466 / NCTC 11488 / FDC 602W) (Vibrio succinogenes) protein is Small ribosomal subunit protein uS19.